The primary structure comprises 143 residues: Putative glycerol transporter Lin0368 (143 aa).

The next 4 helical transmembrane spans lie at 6–26 (GMIG…PLAE), 27–47 (NYGI…MWFM), 60–80 (AAFV…DVFM), and 90–110 (LPTI…AAAI). The tract at residues 118-143 (HEAKQEKTEPGMNIKEEERLNENQLV) is disordered.

The protein localises to the membrane. Could be involved in the glycerol uptake either via facilitated diffusion or active transport. The polypeptide is Putative glycerol transporter Lin0368 (Listeria innocua serovar 6a (strain ATCC BAA-680 / CLIP 11262)).